The sequence spans 315 residues: MLKVKSDFLTKDQVIYDVAIVGAGPAGIAAGIYGKRANLNLAIIEGSTPGGKVVKTNIVENYPGYKSITGPDLGLEMYNHLIDLEPTFFYANLIKLDKAADTFILYLDDKTVVFAKTVIYATGMLERKLGVAKEDHFYGKGISYCAICDGSLYKDQVVGVVGGGNSAIQEALYLASMAKTVHLIHRREGFRADETALNKLRNLPNVVFHLNYTVKELLGNNTLNGIVLQNTLDHSTKQIDLNCVFPYIGFESITKPVEHLNLKLDPQGFLITNEQMETSLKGLFAAGDCRSKHFRQIGTAINDGIIAVLTIRDVL.

45 to 52 (EGSTPGGK) provides a ligand contact to FAD. A disulfide bridge links C145 with C148. An FAD-binding site is contributed by 288-297 (DCRSKHFRQI).

Belongs to the class-II pyridine nucleotide-disulfide oxidoreductase family. Homodimer. Requires FAD as cofactor.

It localises to the cytoplasm. It catalyses the reaction [thioredoxin]-dithiol + NADP(+) = [thioredoxin]-disulfide + NADPH + H(+). In Mycoplasma pneumoniae (strain ATCC 29342 / M129 / Subtype 1) (Mycoplasmoides pneumoniae), this protein is Thioredoxin reductase (trxB).